The chain runs to 207 residues: Small ribosomal subunit protein uS4c (207 aa).

Residues 92 to 150 enclose the S4 RNA-binding domain; sequence MRLDNILFRLGFVPTIPSARQLINHRHILVNNRIVDVPSFHCKPKDIITIGSPKTYQSI.

The protein belongs to the universal ribosomal protein uS4 family. Part of the 30S ribosomal subunit. Contacts protein S5. The interaction surface between S4 and S5 is involved in control of translational fidelity.

Its subcellular location is the plastid. It is found in the chloroplast. Its function is as follows. One of the primary rRNA binding proteins, it binds directly to 16S rRNA where it nucleates assembly of the body of the 30S subunit. With S5 and S12 plays an important role in translational accuracy. The protein is Small ribosomal subunit protein uS4c (rps4) of Equisetum variegatum (Variegated horsetail).